Consider the following 422-residue polypeptide: UDP-N-acetylglucosamine 1-carboxyvinyltransferase (422 aa).

Position 22–23 (22–23) interacts with phosphoenolpyruvate; sequence KN. Residue Arg-92 coordinates UDP-N-acetyl-alpha-D-glucosamine. Cys-116 serves as the catalytic Proton donor. Position 116 is a 2-(S-cysteinyl)pyruvic acid O-phosphothioketal (Cys-116). Residues 121-125, Asp-305, and Ile-327 each bind UDP-N-acetyl-alpha-D-glucosamine; that span reads RPVDQ.

It belongs to the EPSP synthase family. MurA subfamily.

The protein localises to the cytoplasm. The catalysed reaction is phosphoenolpyruvate + UDP-N-acetyl-alpha-D-glucosamine = UDP-N-acetyl-3-O-(1-carboxyvinyl)-alpha-D-glucosamine + phosphate. The protein operates within cell wall biogenesis; peptidoglycan biosynthesis. Functionally, cell wall formation. Adds enolpyruvyl to UDP-N-acetylglucosamine. This is UDP-N-acetylglucosamine 1-carboxyvinyltransferase from Sorangium cellulosum (strain So ce56) (Polyangium cellulosum (strain So ce56)).